Here is a 558-residue protein sequence, read N- to C-terminus: 2-isopropylmalate synthase (558 aa).

Residues 30–303 form the Pyruvate carboxyltransferase domain; that stretch reads PIWCSVDLRD…DPGIDCSDIN (274 aa). The Mg(2+) site is built by Asp-39, His-242, His-244, and Asn-278. The segment at 437 to 558 is regulatory domain; it reads QPGARLKFLD…ANRIVGRKAR (122 aa).

It belongs to the alpha-IPM synthase/homocitrate synthase family. LeuA type 2 subfamily. In terms of assembly, homodimer. Mg(2+) is required as a cofactor.

The protein resides in the cytoplasm. The enzyme catalyses 3-methyl-2-oxobutanoate + acetyl-CoA + H2O = (2S)-2-isopropylmalate + CoA + H(+). Its pathway is amino-acid biosynthesis; L-leucine biosynthesis; L-leucine from 3-methyl-2-oxobutanoate: step 1/4. Catalyzes the condensation of the acetyl group of acetyl-CoA with 3-methyl-2-oxobutanoate (2-ketoisovalerate) to form 3-carboxy-3-hydroxy-4-methylpentanoate (2-isopropylmalate). The chain is 2-isopropylmalate synthase from Mesorhizobium japonicum (strain LMG 29417 / CECT 9101 / MAFF 303099) (Mesorhizobium loti (strain MAFF 303099)).